We begin with the raw amino-acid sequence, 310 residues long: Protoheme IX farnesyltransferase 2 (310 aa).

The next 9 membrane-spanning stretches (helical) occupy residues 25–45 (PGII…AAKG), 49–69 (LVLM…GCAI), 98–118 (HVLL…ALFT), 121–141 (LALL…SLYM), 145–165 (SVYG…VGYC), 176–196 (VILL…IAIF), 222–242 (IVLY…AGYT), 245–265 (AFMA…LKGY), and 277–297 (QVFG…ALDF).

This sequence belongs to the UbiA prenyltransferase family. Protoheme IX farnesyltransferase subfamily.

It is found in the cell inner membrane. It carries out the reaction heme b + (2E,6E)-farnesyl diphosphate + H2O = Fe(II)-heme o + diphosphate. It participates in porphyrin-containing compound metabolism; heme O biosynthesis; heme O from protoheme: step 1/1. Functionally, converts heme B (protoheme IX) to heme O by substitution of the vinyl group on carbon 2 of heme B porphyrin ring with a hydroxyethyl farnesyl side group. The protein is Protoheme IX farnesyltransferase 2 of Shewanella sp. (strain MR-7).